Here is a 257-residue protein sequence, read N- to C-terminus: MSDRKRVYGPSVSVPPYFEEPEQPVFTRTRDVDRCRKIYLKLGWATKAVGSSYFESEKIKIACTVSGPRPSKTFAFRSSAKLNCEFRLSPFSTSVRQGHVQTVEEKSYSQMIEAAISPSILLHLYPKSSIDVYIQVIESDGALATLAAAISCASSAIADANIDCIDLVTGSSVLFNPNTDEYWIDPDYVDERARAAKGSVVMGYMASLGHVTQVWERGTCSPSRLSFLTEKCIKNAKDTRLVINHALLLEKSKSEDP.

The protein belongs to the RNase PH family. As to quaternary structure, component of the RNA exosome complex. Specifically part of the catalytically inactive RNA exosome core complex (Exo-9) may associate with the catalytic subunits rrp6 and dis3 in cytoplasmic- and nuclear-specific RNA exosome complex forms. Exo-9 is formed by a hexameric base ring of RNase PH domain-containing subunits and a cap ring consisting of csl4, rrp4 and rrp40.

Its subcellular location is the cytoplasm. It localises to the nucleus. It is found in the nucleolus. Functionally, non-catalytic component of the RNA exosome complex which has 3'-&gt;5' exoribonuclease activity and participates in a multitude of cellular RNA processing and degradation events. In the nucleus, the RNA exosome complex is involved in proper maturation of stable RNA species such as rRNA, snRNA and snoRNA, in the elimination of RNA processing by-products and non-coding 'pervasive' transcripts, such as antisense RNA species and cryptic unstable transcripts (CUTs), and of mRNAs with processing defects, thereby limiting or excluding their export to the cytoplasm. In the cytoplasm, the RNA exosome complex is involved in general mRNA turnover and in RNA surveillance pathways, preventing translation of aberrant mRNAs. The catalytic inactive RNA exosome core complex of 9 subunits (Exo-9) is proposed to play a pivotal role in the binding and presentation of RNA for ribonucleolysis, and to serve as a scaffold for the association with catalytic subunits and accessory proteins or complexes. ski6 is part of the hexameric ring of RNase PH domain-containing subunits proposed to form a central channel which threads RNA substrates for degradation. The polypeptide is Exosome complex component mtr3 (mtr3) (Schizosaccharomyces pombe (strain 972 / ATCC 24843) (Fission yeast)).